Reading from the N-terminus, the 275-residue chain is NADPH-dependent 7-cyano-7-deazaguanine reductase (275 aa).

A substrate-binding site is contributed by 81 to 83; that stretch reads IES. 83–84 provides a ligand contact to NADPH; the sequence is SK. The active-site Thioimide intermediate is Cys-181. The active-site Proton donor is the Asp-188. Position 220-221 (220-221) interacts with substrate; it reads HE. 249 to 250 is an NADPH binding site; it reads RG.

It belongs to the GTP cyclohydrolase I family. QueF type 2 subfamily. In terms of assembly, homodimer.

It is found in the cytoplasm. The enzyme catalyses 7-aminomethyl-7-carbaguanine + 2 NADP(+) = 7-cyano-7-deazaguanine + 2 NADPH + 3 H(+). Its pathway is tRNA modification; tRNA-queuosine biosynthesis. Functionally, catalyzes the NADPH-dependent reduction of 7-cyano-7-deazaguanine (preQ0) to 7-aminomethyl-7-deazaguanine (preQ1). The chain is NADPH-dependent 7-cyano-7-deazaguanine reductase from Xylella fastidiosa (strain 9a5c).